A 489-amino-acid chain; its full sequence is Betaine aldehyde dehydrogenase (489 aa).

K(+) contacts are provided by T26 and D93. Position 150-152 (150-152 (GAW)) interacts with NAD(+). The active-site Charge relay system is K162. 176 to 179 (KPSE) provides a ligand contact to NAD(+). I180 contacts K(+). 229–232 (GVET) lines the NAD(+) pocket. A K(+)-binding site is contributed by L245. E251 acts as the Proton acceptor in catalysis. NAD(+)-binding residues include G253, C285, and E386. C285 (nucleophile) is an active-site residue. C285 carries the post-translational modification Cysteine sulfenic acid (-SOH). 2 residues coordinate K(+): K456 and G459. The Charge relay system role is filled by E463.

The protein belongs to the aldehyde dehydrogenase family. Dimer of dimers. K(+) is required as a cofactor.

It catalyses the reaction betaine aldehyde + NAD(+) + H2O = glycine betaine + NADH + 2 H(+). It functions in the pathway amine and polyamine biosynthesis; betaine biosynthesis via choline pathway; betaine from betaine aldehyde: step 1/1. Its function is as follows. Involved in the biosynthesis of the osmoprotectant glycine betaine. Catalyzes the irreversible oxidation of betaine aldehyde to the corresponding acid. The chain is Betaine aldehyde dehydrogenase from Paraburkholderia phytofirmans (strain DSM 17436 / LMG 22146 / PsJN) (Burkholderia phytofirmans).